The following is a 424-amino-acid chain: Enolase (424 aa).

Residue Gln163 coordinates (2R)-2-phosphoglycerate. The active-site Proton donor is Glu205. Mg(2+)-binding residues include Asp242, Glu285, and Asp312. Positions 337, 366, 367, and 388 each coordinate (2R)-2-phosphoglycerate. Lys337 serves as the catalytic Proton acceptor.

The protein belongs to the enolase family. It depends on Mg(2+) as a cofactor.

The protein localises to the cytoplasm. It is found in the secreted. Its subcellular location is the cell surface. It catalyses the reaction (2R)-2-phosphoglycerate = phosphoenolpyruvate + H2O. It participates in carbohydrate degradation; glycolysis; pyruvate from D-glyceraldehyde 3-phosphate: step 4/5. In terms of biological role, catalyzes the reversible conversion of 2-phosphoglycerate (2-PG) into phosphoenolpyruvate (PEP). It is essential for the degradation of carbohydrates via glycolysis. This chain is Enolase, found in Roseobacter denitrificans (strain ATCC 33942 / OCh 114) (Erythrobacter sp. (strain OCh 114)).